We begin with the raw amino-acid sequence, 2146 residues long: Conidial pigment polyketide synthase alb1 (2146 aa).

The interval 8–244 (YLFGDQTISC…KAPGVSGPYH (237 aa)) is N-terminal acylcarrier protein transacylase domain (SAT). The Ketosynthase family 3 (KS3) domain occupies 375-806 (RSKIAIIGMS…GGNTALLMED (432 aa)). Active-site for beta-ketoacyl synthase activity residues include C547, H682, and H724. The malonyl-CoA:ACP transacylase (MAT) domain stretch occupies residues 911-1232 (GFVFTGQGAQ…LSTLHLAGVE (322 aa)). Catalysis depends on S1001, which acts as the For acyl/malonyl transferase activity. The segment at 1290–1602 (TTAAQKIVEC…ARKILDTVLP (313 aa)) is product template (PT) domain. Residues 1294-1427 (QKIVECREDG…VKLFNCAERE (134 aa)) are N-terminal hotdog fold. Positions 1294 to 1598 (QKIVECREDG…FQALARKILD (305 aa)) constitute a PKS/mFAS DH domain. Catalysis depends on H1326, which acts as the Proton acceptor; for dehydratase activity. Residues 1453-1598 (AHRMQRGMVY…FQALARKILD (146 aa)) are C-terminal hotdog fold. The Proton donor; for dehydratase activity role is filled by D1511. Residues 1611 to 1644 (GAPAPAPARPIGEKKAPPPIKVTGPPKPNPSNAR) are disordered. Pro residues predominate over residues 1627 to 1639 (PPPIKVTGPPKPN). The Carrier 1 domain occupies 1647 to 1721 (SPVVARALEI…DFKAYLAEKG (75 aa)). S1681 is modified (O-(pantetheine 4'-phosphoryl)serine). Residues 1724–1769 (DSSSPEPSSEPESKFSFNSDASSEASSGLTTPGITSPVKHEAPKGG) are disordered. Positions 1738–1750 (FSFNSDASSEASS) are enriched in low complexity. Residues 1768 to 1845 (GGQNKVWKSI…AVQAALDLKP (78 aa)) form the Carrier 2 domain. S1805 is subject to O-(pantetheine 4'-phosphoryl)serine. Residues 1892–2019 (KLFMFPDGSG…SIGLFGDGKR (128 aa)) form a claisen cyclase domain region. S1962 serves as the catalytic For Claisen cyclase activity.

The protein localises to the endosome. The enzyme catalyses 6 malonyl-CoA + acetyl-CoA + 6 H(+) = naphtopyrone YWA1 + 6 CO2 + 7 CoA + H2O. Its pathway is pigment biosynthesis; melanin biosynthesis. Non-reducing polyketide synthase; part of the gene cluster that mediates the biosynthesis of dihydroxynaphthalene (DHN)-melanin, a bluish-green pigment and a structural component of the conidial wall. The first step of the pathway is the production of the heptaketide naphtopyrone YWA1 by the polyketide synthase alb1 though condensation of acetyl-CoA with malonyl-CoA. The naphtopyrone YWA1 is then converted to the pentaketide 1,3,6,8-tetrahydroxynaphthalene (1,3,6,8-THN) by the heptaketide hydrolyase ayg1 though chain-length shortening. 1,3,6,8-THN is substrate of the hydroxynaphthalene reductase arp2 to yield scytalone. The scytalone dehydratase arp1 then reduces scytalone to 1,3,8-THN. 1,3,8-THN is also substrate of the hydroxynaphthalene reductase arp2 to yield vermelone. Vermelone is further converted by the multicopper oxidase abr1 to 1,8-DHN. Finally the laccase abr2 transforms 1,8-DHN to DHN-melanin. DHN-melanin biosynthesis appears to be initiated in endosomes where early enzymes (abl1, ayg1, arp1 and arp2) localize, with exocytosis leading to melanin deposition on the cell surface where late enzymes (abr1 and abr2) localize. DHN-melanin is an important structural component of the outer cell wall and is required for the presence of conidial surface hydrophobins. DHN-melanin also plays a crucial role in fungal virulence, including a protective role against the host's immune defenses. DHN-melanin protects also conidia against amoeba predation. In Aspergillus fumigatus (strain ATCC MYA-4609 / CBS 101355 / FGSC A1100 / Af293) (Neosartorya fumigata), this protein is Conidial pigment polyketide synthase alb1.